The chain runs to 404 residues: Chorismate synthase (404 aa).

Arg-47 serves as a coordination point for NADP(+). FMN-binding positions include 156 to 158, 281 to 282, Gly-321, 336 to 340, and Arg-363; these read RSS, NA, and KPTST.

This sequence belongs to the chorismate synthase family. As to quaternary structure, homotetramer. FMNH2 is required as a cofactor.

The catalysed reaction is 5-O-(1-carboxyvinyl)-3-phosphoshikimate = chorismate + phosphate. Its pathway is metabolic intermediate biosynthesis; chorismate biosynthesis; chorismate from D-erythrose 4-phosphate and phosphoenolpyruvate: step 7/7. Functionally, catalyzes the anti-1,4-elimination of the C-3 phosphate and the C-6 proR hydrogen from 5-enolpyruvylshikimate-3-phosphate (EPSP) to yield chorismate, which is the branch point compound that serves as the starting substrate for the three terminal pathways of aromatic amino acid biosynthesis. This reaction introduces a second double bond into the aromatic ring system. The polypeptide is Chorismate synthase (Rhodopirellula baltica (strain DSM 10527 / NCIMB 13988 / SH1)).